The chain runs to 473 residues: MSPQTETKASVGFKAGVKDYKLTYYTPDYQTKDTDILAAFRVTPQPGVPPEEAGAAVAAESSTGTWTTVWTDGLTSLDRYKGRCYHIEPVAGEENQFIAYVAYPLDLFEEGSVTNMFTSIVGNVFGFKALRALRLEDLRIPTAYIKTFQGPPHGIQVERDKLNKYGRPLLGCTIKPKLGLSAKNYGRAVYECLRGGLDFTKDDENVNSQPFMRWRDRFLFCAEAIYKAQAETGEIKGHYLNATAGTCEEMIKRAVFARELGVPIVMHDYLTGGFTANTSLAHYCRDNGLLLHIHRAMHAVIDRQKNHGMHFRVLAKALRLSGGDHVHSGTVVGKLEGEREITLGFVDLLRDDFIEKDRSRGIYFTQDWVSLPGVLPVASGGIHVWHMPALTEIFGDDSVLQFGGGTLGHPWGNAPGAVANRVALEACVQARNEGRDLAREGNEIIREASKWSPELAAACEVWKEIKFEFPAMD.

Residues 1–2 (MS) constitute a propeptide that is removed on maturation. Substrate-binding residues include asparagine 123 and threonine 173. The active-site Proton acceptor is the lysine 175. Substrate is bound at residue lysine 177. Residues lysine 201, aspartate 203, and glutamate 204 each coordinate Mg(2+). Lysine 201 carries the N6-carboxylysine modification. Phosphoserine is present on serine 208. Histidine 294 serves as the catalytic Proton acceptor. Substrate-binding residues include arginine 295 and histidine 327. Threonine 330 is modified (phosphothreonine). Serine 379 is a binding site for substrate.

The protein belongs to the RuBisCO large chain family. Type I subfamily. As to quaternary structure, heterohexadecamer of 8 large chains and 8 small chains; disulfide-linked. The disulfide link is formed within the large subunit homodimers. It depends on Mg(2+) as a cofactor. In terms of processing, the disulfide bond which can form in the large chain dimeric partners within the hexadecamer appears to be associated with oxidative stress and protein turnover.

It is found in the plastid. It localises to the chloroplast. It carries out the reaction 2 (2R)-3-phosphoglycerate + 2 H(+) = D-ribulose 1,5-bisphosphate + CO2 + H2O. It catalyses the reaction D-ribulose 1,5-bisphosphate + O2 = 2-phosphoglycolate + (2R)-3-phosphoglycerate + 2 H(+). In terms of biological role, ruBisCO catalyzes two reactions: the carboxylation of D-ribulose 1,5-bisphosphate, the primary event in carbon dioxide fixation, as well as the oxidative fragmentation of the pentose substrate in the photorespiration process. Both reactions occur simultaneously and in competition at the same active site. This Sinapis alba (White mustard) protein is Ribulose bisphosphate carboxylase large chain.